Consider the following 409-residue polypeptide: Sex-determination protein fem-3 (409 aa).

In terms of assembly, component of a complex containing fem-1, fem-2 and fem-3. Interacts with fem-1 and fem-2 (via N-terminus). Part of a E3 ubiquitin-protein ligase complex, at least composed of cul-2, elc-1, tra-1, fem-1, fem-2 and fem-3; mediates the ubiquitination and subsequent proteasomal degradation of tra-1. Interacts with sel-10. Interacts with tra-2.

Required for male development. In XO (male) animals, fem-3 directs male differentiation in all tissues. In XX (hermaphrodite animals), it specifies the first 80 or so germ cells to be sperm. Negatively regulates male development when bound to tra-2. The polypeptide is Sex-determination protein fem-3 (Caenorhabditis briggsae).